We begin with the raw amino-acid sequence, 266 residues long: 4-hydroxy-tetrahydrodipicolinate reductase (266 aa).

Position 11-16 (11-16 (GALGKM)) interacts with NAD(+). NADP(+) is bound at residue K39. 100–102 (GTT) contributes to the NAD(+) binding site. The active-site Proton donor/acceptor is H156. (S)-2,3,4,5-tetrahydrodipicolinate is bound at residue H157. Catalysis depends on K160, which acts as the Proton donor. 166-167 (GT) is a (S)-2,3,4,5-tetrahydrodipicolinate binding site.

This sequence belongs to the DapB family.

Its subcellular location is the cytoplasm. It carries out the reaction (S)-2,3,4,5-tetrahydrodipicolinate + NAD(+) + H2O = (2S,4S)-4-hydroxy-2,3,4,5-tetrahydrodipicolinate + NADH + H(+). The catalysed reaction is (S)-2,3,4,5-tetrahydrodipicolinate + NADP(+) + H2O = (2S,4S)-4-hydroxy-2,3,4,5-tetrahydrodipicolinate + NADPH + H(+). Its pathway is amino-acid biosynthesis; L-lysine biosynthesis via DAP pathway; (S)-tetrahydrodipicolinate from L-aspartate: step 4/4. Its function is as follows. Catalyzes the conversion of 4-hydroxy-tetrahydrodipicolinate (HTPA) to tetrahydrodipicolinate. This is 4-hydroxy-tetrahydrodipicolinate reductase from Syntrophomonas wolfei subsp. wolfei (strain DSM 2245B / Goettingen).